Here is a 233-residue protein sequence, read N- to C-terminus: Ribosomal RNA small subunit methyltransferase G (233 aa).

S-adenosyl-L-methionine contacts are provided by residues Gly91, Met96, 142–143, and Arg157; that span reads VE.

It belongs to the methyltransferase superfamily. RNA methyltransferase RsmG family.

The protein localises to the cytoplasm. It carries out the reaction guanosine(527) in 16S rRNA + S-adenosyl-L-methionine = N(7)-methylguanosine(527) in 16S rRNA + S-adenosyl-L-homocysteine. Functionally, specifically methylates the N7 position of guanine in position 527 of 16S rRNA. The chain is Ribosomal RNA small subunit methyltransferase G from Cupriavidus necator (strain ATCC 17699 / DSM 428 / KCTC 22496 / NCIMB 10442 / H16 / Stanier 337) (Ralstonia eutropha).